Here is a 35-residue protein sequence, read N- to C-terminus: Cytochrome c-550 (35 aa).

Heme c contacts are provided by C17, C20, and H21.

Binds 1 heme c group covalently per subunit.

Monoheme cytochrome which functions as an electron carrier in the reduction of nitrite by membrane vesicles. This is Cytochrome c-550 from Virgibacillus halodenitrificans (Bacillus halodenitrificans).